Consider the following 397-residue polypeptide: Succinyl-diaminopimelate desuccinylase (397 aa).

His-73 contacts Zn(2+). Asp-75 is an active-site residue. Asp-106 contacts Zn(2+). The Proton acceptor role is filled by Glu-140. Residues Glu-141, Glu-169, and His-366 each contribute to the Zn(2+) site.

Belongs to the peptidase M20A family. DapE subfamily. Homodimer. The cofactor is Zn(2+). Co(2+) is required as a cofactor.

The catalysed reaction is N-succinyl-(2S,6S)-2,6-diaminopimelate + H2O = (2S,6S)-2,6-diaminopimelate + succinate. Its pathway is amino-acid biosynthesis; L-lysine biosynthesis via DAP pathway; LL-2,6-diaminopimelate from (S)-tetrahydrodipicolinate (succinylase route): step 3/3. Catalyzes the hydrolysis of N-succinyl-L,L-diaminopimelic acid (SDAP), forming succinate and LL-2,6-diaminopimelate (DAP), an intermediate involved in the bacterial biosynthesis of lysine and meso-diaminopimelic acid, an essential component of bacterial cell walls. This chain is Succinyl-diaminopimelate desuccinylase, found in Rhizobium etli (strain ATCC 51251 / DSM 11541 / JCM 21823 / NBRC 15573 / CFN 42).